We begin with the raw amino-acid sequence, 89 residues long: Small ribosomal subunit protein uS15 (89 aa).

Belongs to the universal ribosomal protein uS15 family. As to quaternary structure, part of the 30S ribosomal subunit. Forms a bridge to the 50S subunit in the 70S ribosome, contacting the 23S rRNA.

Its function is as follows. One of the primary rRNA binding proteins, it binds directly to 16S rRNA where it helps nucleate assembly of the platform of the 30S subunit by binding and bridging several RNA helices of the 16S rRNA. In terms of biological role, forms an intersubunit bridge (bridge B4) with the 23S rRNA of the 50S subunit in the ribosome. This is Small ribosomal subunit protein uS15 from Beutenbergia cavernae (strain ATCC BAA-8 / DSM 12333 / CCUG 43141 / JCM 11478 / NBRC 16432 / NCIMB 13614 / HKI 0122).